The sequence spans 312 residues: Methionyl-tRNA formyltransferase (312 aa).

109–112 (SLLP) serves as a coordination point for (6S)-5,6,7,8-tetrahydrofolate.

Belongs to the Fmt family.

It carries out the reaction L-methionyl-tRNA(fMet) + (6R)-10-formyltetrahydrofolate = N-formyl-L-methionyl-tRNA(fMet) + (6S)-5,6,7,8-tetrahydrofolate + H(+). In terms of biological role, attaches a formyl group to the free amino group of methionyl-tRNA(fMet). The formyl group appears to play a dual role in the initiator identity of N-formylmethionyl-tRNA by promoting its recognition by IF2 and preventing the misappropriation of this tRNA by the elongation apparatus. The polypeptide is Methionyl-tRNA formyltransferase (Listeria monocytogenes serotype 4b (strain CLIP80459)).